The following is a 222-amino-acid chain: Triosephosphate isomerase (222 aa).

9–11 (NYK) lines the substrate pocket. The active-site Electrophile is the His-93. Residue Glu-141 is the Proton acceptor of the active site. Substrate-binding positions include Ile-146, Gly-181, and 202–203 (AS).

Belongs to the triosephosphate isomerase family. In terms of assembly, homotetramer; dimer of dimers.

The protein localises to the cytoplasm. It catalyses the reaction D-glyceraldehyde 3-phosphate = dihydroxyacetone phosphate. It participates in carbohydrate biosynthesis; gluconeogenesis. The protein operates within carbohydrate degradation; glycolysis; D-glyceraldehyde 3-phosphate from glycerone phosphate: step 1/1. Its function is as follows. Involved in the gluconeogenesis. Catalyzes stereospecifically the conversion of dihydroxyacetone phosphate (DHAP) to D-glyceraldehyde-3-phosphate (G3P). This is Triosephosphate isomerase from Methanobrevibacter smithii (strain ATCC 35061 / DSM 861 / OCM 144 / PS).